The primary structure comprises 335 residues: Tetraacyldisaccharide 4'-kinase (335 aa).

59–66 (TAGGNGKT) lines the ATP pocket.

Belongs to the LpxK family.

It catalyses the reaction a lipid A disaccharide + ATP = a lipid IVA + ADP + H(+). Its pathway is glycolipid biosynthesis; lipid IV(A) biosynthesis; lipid IV(A) from (3R)-3-hydroxytetradecanoyl-[acyl-carrier-protein] and UDP-N-acetyl-alpha-D-glucosamine: step 6/6. In terms of biological role, transfers the gamma-phosphate of ATP to the 4'-position of a tetraacyldisaccharide 1-phosphate intermediate (termed DS-1-P) to form tetraacyldisaccharide 1,4'-bis-phosphate (lipid IVA). In Aliivibrio salmonicida (strain LFI1238) (Vibrio salmonicida (strain LFI1238)), this protein is Tetraacyldisaccharide 4'-kinase.